A 337-amino-acid polypeptide reads, in one-letter code: Large ribosomal subunit protein uL3 (337 aa).

Positions 1 to 20 (MASIHRPKRGSLAFSPRKRA) are disordered.

This sequence belongs to the universal ribosomal protein uL3 family. In terms of assembly, part of the 50S ribosomal subunit. Forms a cluster with proteins L14 and L24e.

In terms of biological role, one of the primary rRNA binding proteins, it binds directly near the 3'-end of the 23S rRNA, where it nucleates assembly of the 50S subunit. The chain is Large ribosomal subunit protein uL3 from Methanosarcina mazei (strain ATCC BAA-159 / DSM 3647 / Goe1 / Go1 / JCM 11833 / OCM 88) (Methanosarcina frisia).